Consider the following 564-residue polypeptide: NAD-dependent malic enzyme (564 aa).

Residue Y102 is the Proton donor of the active site. R155 lines the NAD(+) pocket. K173 acts as the Proton acceptor in catalysis. Residues E244, D245, and D268 each coordinate a divalent metal cation. 2 residues coordinate NAD(+): D268 and N417.

The protein belongs to the malic enzymes family. As to quaternary structure, homotetramer. Mg(2+) is required as a cofactor. The cofactor is Mn(2+).

The catalysed reaction is (S)-malate + NAD(+) = pyruvate + CO2 + NADH. It carries out the reaction oxaloacetate + H(+) = pyruvate + CO2. This Pseudomonas aeruginosa (strain ATCC 15692 / DSM 22644 / CIP 104116 / JCM 14847 / LMG 12228 / 1C / PRS 101 / PAO1) protein is NAD-dependent malic enzyme.